Here is a 614-residue protein sequence, read N- to C-terminus: Polyamine transporter 2 (614 aa).

The interval 1–40 (MSDQESVVSFNSQNTSMVDVEGQQPQQYVPSKTNSRANQL) is disordered. At 1–173 (MSDQESVVSF…WPSWVRWSYT (173 aa)) the chain is on the cytoplasmic side. Residue Ser50 is modified to Phosphoserine. The segment covering 99-122 (RTASALSRTRTKQLNRTATNSSST) has biased composition (polar residues). The interval 99–144 (RTASALSRTRTKQLNRTATNSSSTGKEEMEEEETEEREDQSGENEL) is disordered. A compositionally biased stretch (acidic residues) spans 126-144 (EMEEEETEEREDQSGENEL). Residues 174-194 (VLLSILVICVAYGSACISGGL) traverse the membrane as a helical segment. At 195–206 (GTVEKKYHVGME) the chain is on the extracellular side. Residues 207-227 (AAILSCSLMVIGFSLGPLIWS) form a helical membrane-spanning segment. Over 228–236 (PVSDLYGRR) the chain is Cytoplasmic. The helical transmembrane segment at 237–257 (VAYFVSMGLYVIFNIPCALAP) threads the bilayer. The Extracellular segment spans residues 258 to 266 (NLGCLLACR). A helical transmembrane segment spans residues 267 to 287 (FLCGVWSSSGLCLVGGSIADM). Topologically, residues 288–297 (FPSETRGKAI) are cytoplasmic. The helical transmembrane segment at 298–318 (AFFAFAPYVGPVVGPLVNGFI) threads the bilayer. Topologically, residues 319–326 (SVSTGRMD) are extracellular. A helical transmembrane segment spans residues 327–347 (LIFWVNMAFAGVMWIISSAIP). Residues 348–407 (ETYAPVILKRKAARLRKETGNPKIMTEQEAQGVSMSEMMRACLLRPLYFAVTEPVLVATC) lie on the Cytoplasmic side of the membrane. The helical transmembrane segment at 408–428 (FYVCLIYSLLYAFFFAFPVIF) threads the bilayer. Residues 429 to 437 (GELYGYKDN) are Extracellular-facing. The chain crosses the membrane as a helical span at residues 438-458 (LVGLMFIPIVIGALWALATTF). The Cytoplasmic portion of the chain corresponds to 459–478 (YCENKYLQIVKQRKPTPEDR). Residues 479–499 (LLGAKIGAPFAAIALWILGAT) traverse the membrane as a helical segment. Residues 500-503 (AYKH) are Extracellular-facing. A helical transmembrane segment spans residues 504–524 (IIWVGPASAGLAFGFGMVLIY). The Cytoplasmic segment spans residues 525–541 (YSLNNYIIDCYVQYASS). A helical membrane pass occupies residues 542-562 (ALATKVFLRSAGGAAFPLFTI). At 563–574 (QMYHKLNLHWGS) the chain is on the extracellular side. The chain crosses the membrane as a helical span at residues 575–595 (WLLAFISTAMIALPFAFSYWG). At 596 to 614 (KGLRHKLSKKDYSIDSVEM) the chain is on the cytoplasmic side.

This sequence belongs to the major facilitator superfamily. DHA1 family. Polyamines/proton antiporter (TC 2.A.1.2.16) subfamily.

It localises to the cell membrane. Its function is as follows. Cell membrane polyamine/proton antiporter, involved in the detoxification of excess polyamines in the cytoplasm. Recognizes spermine, but not spermidine. This Saccharomyces cerevisiae (strain ATCC 204508 / S288c) (Baker's yeast) protein is Polyamine transporter 2 (TPO2).